Consider the following 792-residue polypeptide: Homeobox protein HAZ1 (792 aa).

The interval 1-154 (MDKTTTSDLV…RPPKGGTPKD (154 aa)) is disordered. Polar residues predominate over residues 15–36 (NIGSNAGSAQEPLTTNGKTSGV). Residues 38–49 (NRYKQTVKRGRK) are compositionally biased toward basic residues. Residues 51 to 67 (SQISPSKTYPLRSSHSN) show a composition bias toward polar residues. Residues 95–104 (VAKKRKRSKP) are compositionally biased toward basic residues. The span at 116–127 (TSEKKNKAHNEL) shows a compositional bias: basic and acidic residues. The PHD-type zinc finger occupies 244 to 301 (DIFCAACGSKDVTLKNDIILCDGICDRGFHQYCLNPPLLAEDIPQGDEGWLCPACDCK). Disordered regions lie at residues 338-495 (QIDA…NSNL) and 529-599 (YGKA…SDQQ). Residues 345–354 (PSDDSADNDY) are compositionally biased toward acidic residues. The segment covering 362–371 (HKVDEEKSSG) has biased composition (basic and acidic residues). Acidic residues-rich tracts occupy residues 373–389 (DGGE…EDSE) and 433–453 (DESN…DDFC). A DNA-binding region (homeobox) is located at residues 610–669 (STAKNRHFGPAINQKLKAHFKEDPYPSRATKENLAQELGLTFNQVTKWFSSTRHYARVAA). Disordered stretches follow at residues 677-697 (ENHT…QLRG) and 711-792 (SEER…KTGR). Polar residues-rich tracts occupy residues 716-737 (GQSN…QSVA) and 746-760 (NQGN…TPNA). Over residues 774–792 (DEARRKAVQRELRKMKTGR) the composition is skewed to basic and acidic residues.

This sequence belongs to the PHD-associated homeobox family. As to expression, expressed in roots, leaves, stems, panicle and seeds.

The protein localises to the nucleus. In terms of biological role, transcriptional repressor involved in the regulation of gibberrelin (GA) signaling. Binds to the 5'-GATC-3' motif of HD16/EL1 promoter. Functions as a positive regulator of GA signaling by suppressing the expression of HD16/EL1, a negative regulator of GA signaling. This Oryza sativa subsp. japonica (Rice) protein is Homeobox protein HAZ1.